The following is a 260-amino-acid chain: Phosphate import ATP-binding protein PstB (260 aa).

One can recognise an ABC transporter domain in the interval 14-255 (LQIRNLDFFY…PGKKQTEDYI (242 aa)). ATP is bound at residue 46–53 (GPSGCGKS).

This sequence belongs to the ABC transporter superfamily. Phosphate importer (TC 3.A.1.7) family. The complex is composed of two ATP-binding proteins (PstB), two transmembrane proteins (PstC and PstA) and a solute-binding protein (PstS).

Its subcellular location is the cell inner membrane. The enzyme catalyses phosphate(out) + ATP + H2O = ADP + 2 phosphate(in) + H(+). Part of the ABC transporter complex PstSACB involved in phosphate import. Responsible for energy coupling to the transport system. The chain is Phosphate import ATP-binding protein PstB from Thiobacillus denitrificans (strain ATCC 25259 / T1).